We begin with the raw amino-acid sequence, 160 residues long: Cathelin-related peptide SC5 (160 aa).

Residues 1 to 29 form the signal peptide; the sequence is METQRASLSLGRRSLWLLLLGLVLASASA. The propeptide occupies 30-131; that stretch reads QALSYREAVL…DITCAEPQSV (102 aa). Cystine bridges form between Cys-86-Cys-97 and Cys-108-Cys-125.

The protein belongs to the cathelicidin family.

Its subcellular location is the secreted. Functionally, broad spectrum bactericidal agent. The protein is Cathelin-related peptide SC5 of Ovis aries (Sheep).